Consider the following 603-residue polypeptide: Alpha-1,2-mannosyltransferase algn-9 (603 aa).

The tract at residues 1-25 is disordered; that stretch reads MVTHRRKGGSGPPQKPPPRIVDRSS. Over 1–108 the chain is Lumenal; that stretch reads MVTHRRKGGS…EYSPVYAIRS (108 aa). A helical transmembrane segment spans residues 109-129; it reads YFYIYLHYIPASLFANLFGDT. Residue lysine 130 is a topological domain, cytoplasmic. The chain crosses the membrane as a helical span at residues 131 to 151; it reads IVVFTLIRLTIGLFCLLGEYY. Topologically, residues 152–166 are lumenal; that stretch reads AFDAICKKINIATGR. The chain crosses the membrane as a helical span at residues 167–187; sequence FFILFSIFSSGMFLASTAFVP. Residues 188–195 are Cytoplasmic-facing; that stretch reads SSFCMAIT. Residues 196–216 form a helical membrane-spanning segment; it reads FYILGAYLNENWTAGIFCVAF. Residues 217 to 218 are Lumenal-facing; the sequence is ST. Residues 219–239 traverse the membrane as a helical segment; sequence MVGWPFSAVLGLPIVADMLLL. Over 240–245 the chain is Cytoplasmic; that stretch reads KGLRIR. The chain crosses the membrane as a helical span at residues 246–266; that stretch reads FILTSLVIGLCIGGVQVITDS. Topologically, residues 267-310 are lumenal; that stretch reads HYFGKTVLAPLNIFLYNVVSGPGPSLYGEEPLSFYIKNLFNNWN. A helical transmembrane segment spans residues 311 to 331; it reads IVIFAAPFGFPLSLAYFTKVW. At 332–343 the chain is on the cytoplasmic side; that stretch reads MSQDRNVALYQR. A helical transmembrane segment spans residues 344–364; sequence FAPIILLAVTTAAWLLIFGSQ. At 365-370 the chain is on the lumenal side; that stretch reads AHKEER. A helical membrane pass occupies residues 371-391; it reads FLFPIYPFIAFFAALALDATN. The Cytoplasmic segment spans residues 392–397; the sequence is RLCLKK. A helical membrane pass occupies residues 398 to 418; that stretch reads LGMDNILSILFILCFAILSAS. Topologically, residues 419 to 603 are lumenal; the sequence is RTYSIHNNYG…TCTLYRKSNL (185 aa). Asparagine 443 carries an N-linked (GlcNAc...) asparagine glycan.

It belongs to the glycosyltransferase 22 family.

The protein resides in the endoplasmic reticulum membrane. The enzyme catalyses an alpha-D-Man-(1-&gt;2)-alpha-D-Man-(1-&gt;2)-alpha-D-Man-(1-&gt;3)-[alpha-D-Man-(1-&gt;3)-alpha-D-Man-(1-&gt;6)]-beta-D-Man-(1-&gt;4)-beta-D-GlcNAc-(1-&gt;4)-alpha-D-GlcNAc-diphospho-di-trans,poly-cis-dolichol + a di-trans,poly-cis-dolichyl beta-D-mannosyl phosphate = an alpha-D-Man-(1-&gt;2)-alpha-D-Man-(1-&gt;2)-alpha-D-Man-(1-&gt;3)-[alpha-D-Man-(1-&gt;2)-alpha-D-Man-(1-&gt;3)-alpha-D-Man-(1-&gt;6)]-beta-D-Man-(1-&gt;4)-beta-D-GlcNAc-(1-&gt;4)-alpha-D-GlcNAc-diphospho-di-trans,poly-cis-dolichol + a di-trans,poly-cis-dolichyl phosphate + H(+). The catalysed reaction is an alpha-D-Man-(1-&gt;2)-alpha-D-Man-(1-&gt;2)-alpha-D-Man-(1-&gt;3)-[alpha-D-Man-(1-&gt;2)-alpha-D-Man-(1-&gt;3)-[alpha-D-Man-(1-&gt;6)]-alpha-D-Man-(1-&gt;6)]-beta-D-Man-(1-&gt;4)-beta-D-GlcNAc-(1-&gt;4)-alpha-D-GlcNAc-diphospho-di-trans,poly-cis-dolichol + a di-trans,poly-cis-dolichyl beta-D-mannosyl phosphate = an alpha-D-Man-(1-&gt;2)-alpha-D-Man-(1-&gt;2)-alpha-D-Man-(1-&gt;3)-[alpha-D-Man-(1-&gt;2)-alpha-D-Man-(1-&gt;3)-[alpha-D-Man-(1-&gt;2)-alpha-D-Man-(1-&gt;6)]-alpha-D-Man-(1-&gt;6)]-beta-D-Man-(1-&gt;4)-beta-D-GlcNAc-(1-&gt;4)-alpha-D-GlcNAc-diphospho-di-trans,poly-cis-dolichol + a di-trans,poly-cis-dolichyl phosphate + H(+). Its pathway is protein modification; protein glycosylation. Its function is as follows. Catalyzes the transfer of mannose from Dol-P-Man to lipid-linked oligosaccharides. The chain is Alpha-1,2-mannosyltransferase algn-9 from Caenorhabditis elegans.